The primary structure comprises 136 residues: Methylglyoxal synthase (136 aa).

One can recognise an MGS-like domain in the interval 1–136 (MKIALIAHDR…REVVREENEA (136 aa)). Substrate-binding positions include His8, Lys12, 34–37 (TGTT), and 54–55 (SG). The active-site Proton donor/acceptor is Asp60. His87 lines the substrate pocket.

Belongs to the methylglyoxal synthase family.

The catalysed reaction is dihydroxyacetone phosphate = methylglyoxal + phosphate. Its function is as follows. Catalyzes the formation of methylglyoxal from dihydroxyacetone phosphate. This is Methylglyoxal synthase from Brevibacillus brevis (strain 47 / JCM 6285 / NBRC 100599).